Reading from the N-terminus, the 161-residue chain is Protein-export protein SecB (161 aa).

This sequence belongs to the SecB family. In terms of assembly, homotetramer, a dimer of dimers. One homotetramer interacts with 1 SecA dimer.

The protein localises to the cytoplasm. Its function is as follows. One of the proteins required for the normal export of preproteins out of the cell cytoplasm. It is a molecular chaperone that binds to a subset of precursor proteins, maintaining them in a translocation-competent state. It also specifically binds to its receptor SecA. The protein is Protein-export protein SecB of Pseudomonas fluorescens (strain Pf0-1).